We begin with the raw amino-acid sequence, 156 residues long: Cell division protein SepF (156 aa).

The span at 23-36 (SYEKEQTDMKKQQD) shows a compositional bias: basic and acidic residues. Residues 23 to 48 (SYEKEQTDMKKQQDPPEQQDVTFPKA) form a disordered region. The segment covering 37–48 (PPEQQDVTFPKA) has biased composition (polar residues).

This sequence belongs to the SepF family. In terms of assembly, homodimer. Interacts with FtsZ.

Its subcellular location is the cytoplasm. Its function is as follows. Cell division protein that is part of the divisome complex and is recruited early to the Z-ring. Probably stimulates Z-ring formation, perhaps through the cross-linking of FtsZ protofilaments. Its function overlaps with FtsA. This is Cell division protein SepF from Bacillus cereus (strain ATCC 10987 / NRS 248).